Here is a 535-residue protein sequence, read N- to C-terminus: Ribonuclease Y (535 aa).

A helical transmembrane segment spans residues 4 to 24; sequence IILLIVSALIGLILGYALISI. The disordered stretch occupies residues 118–141; sequence ENLSSKEKVLDSKEQSLTDKSKHI. One can recognise a KH domain in the interval 225-285; that stretch reads TITSVHLPDD…IRREIARMTL (61 aa). In terms of domain architecture, HD spans 351–444; the sequence is VLRHSVEVGK…VAAADALSSA (94 aa).

It belongs to the RNase Y family.

The protein localises to the cell membrane. Functionally, endoribonuclease that initiates mRNA decay. In Streptococcus pyogenes serotype M1, this protein is Ribonuclease Y.